Consider the following 424-residue polypeptide: Keratin, type I cytoskeletal 20 (424 aa).

Positions 1–69 (MDFSRRSFHR…TGGGDLFVGN (69 aa)) are head. Ser13 is subject to Phosphoserine; by MAPKAPK2, MAPKAPK3 and PKC. The tract at residues 70–105 (EKMAMQNLNDRLASYLEKVRTLEQSNSKLEVQIKQW) is coil 1A. Residues 70-381 (EKMAMQNLND…RLLEGEDVKT (312 aa)) form the IF rod domain. The tract at residues 106 to 123 (YETNAPRAGRDYSAYYRQ) is linker 1. A coil 1B region spans residues 124-215 (IEELRSQIKD…KEHQEEVDGL (92 aa)). The segment at 216 to 238 (HKHLGNTVNVEVDAAPGLNLGVI) is linker 12. The tract at residues 239–377 (MNEMRQKYEV…ATYRRLLEGE (139 aa)) is coil 2. Residues 378–424 (DVKTTEYQLSTLEERDIKKTRKIKTVVQEVVDGKVVSSEVKEVEENI) are tail.

The protein belongs to the intermediate filament family. Heterotetramer of two type I and two type II keratins. Associates with KRT8. Hyperphosphorylation at Ser-13 occurs during the early stages of apoptosis but becomes less prominent during the later stages. Phosphorylation at Ser-13 also increases in response to stress brought on by cell injury. Post-translationally, proteolytically cleaved by caspases during apoptosis. Cleavage occurs at Asp-228. In terms of tissue distribution, expressed predominantly in the intestinal epithelium. Expressed in luminal cells of colonic mucosa. Also expressed in the Merkel cells of keratinized oral mucosa; specifically at the tips of some rete ridges of the gingival mucosa, in the basal layer of the palatal mucosa and in the taste buds of lingual mucosa.

It is found in the cytoplasm. In terms of biological role, plays a significant role in maintaining keratin filament organization in intestinal epithelia. When phosphorylated, plays a role in the secretion of mucin in the small intestine. This chain is Keratin, type I cytoskeletal 20 (KRT20), found in Homo sapiens (Human).